A 365-amino-acid chain; its full sequence is Keratin-associated protein 10-6 (365 aa).

29 repeat units span residues 41–45 (CCEPP), 46–50 (CCAPA), 67–71 (CCPVT), 89–93 (CCQQS), 99–103 (CCASS), 109–113 (CCVPV), 114–118 (CCKTV), 119–123 (CCKPV), 124–128 (CCVSV), 129–133 (CCGDS), 135–139 (CCQQS), 145–149 (CCTSS), 155–159 (CCVPV), 160–164 (CCKPV), 172–176 (CCQQS), 186–190 (CCQAV), 208–212 (CCQQS), 218–222 (CCTSS), 228–232 (CCVPV), 233–237 (CCVPV), 238–242 (CCVPT), 250–254 (CCQQS), 260–264 (CCTSS), 270–274 (CCVPV), 282–286 (CCQQS), 292–296 (CCTAS), 297–301 (CCRSS), 316–320 (CCVPV), and 334–338 (CCRTA). Residues 41-338 (CCEPPCCAPA…SCQPSCCRTA (298 aa)) form a 29 X 5 AA repeats of C-C-X(3) region.

It belongs to the KRTAP type 10 family. Interacts with hair keratins. Restricted to a narrow region of the hair fiber cuticle, lying approximately 20 cell layers above the apex of the dermal papilla of the hair root; not detected in any other tissues.

In the hair cortex, hair keratin intermediate filaments are embedded in an interfilamentous matrix, consisting of hair keratin-associated proteins (KRTAP), which are essential for the formation of a rigid and resistant hair shaft through their extensive disulfide bond cross-linking with abundant cysteine residues of hair keratins. The matrix proteins include the high-sulfur and high-glycine-tyrosine keratins. This Homo sapiens (Human) protein is Keratin-associated protein 10-6 (KRTAP10-6).